Consider the following 346-residue polypeptide: 2,5-dichlorohydroquinone reductive dechlorinase (346 aa).

Positions 43-154 (PRFELFHFVF…YLCDALSGGT (112 aa)) constitute a GST N-terminal domain. Residues 189–335 (DRRPESMQAV…AIIQWPGHPP (147 aa)) form the GST C-terminal domain.

Belongs to the GST superfamily.

It carries out the reaction 2,5-dichlorohydroquinone + 2 glutathione = chlorohydroquinone + glutathione disulfide + chloride + H(+). The enzyme catalyses chlorohydroquinone + 2 glutathione = hydroquinone + glutathione disulfide + chloride + H(+). It functions in the pathway xenobiotic degradation; gamma-hexachlorocyclohexane degradation. In terms of biological role, catalyzes the degradation of 2,5-dichlorohydroquinone (2,5-DCHQ) into hydroquinone (HQ) via chlorohydroquinone (CHQ). Is involved in the degradation pathway that allows S.japonicum UT26 to grow on gamma-hexachlorocyclohexane (gamma-HCH or lindane) as the sole source of carbon and energy. However, the conversion of CHQ to HQ by LinD seems not to be essential for this degradation pathway, because the conversion rate of CHQ to HQ is much lower than that of 2,5-DCHQ to CHQ. CHQ is more efficiently degraded by LinE in strain UT26. The sequence is that of 2,5-dichlorohydroquinone reductive dechlorinase from Sphingobium indicum (strain DSM 16413 / CCM 7287 / MTCC 6362 / UT26 / NBRC 101211 / UT26S) (Sphingobium japonicum).